The sequence spans 397 residues: Serpin B10 (397 aa).

Positions 62–85 (RDQGVKSSPESEKKRKMEFNSSNS) are disordered. A compositionally biased stretch (basic and acidic residues) spans 70 to 79 (PESEKKRKME). Residues 74-77 (KKRK) carry the Nuclear localization signal motif.

Belongs to the serpin family. Ov-serpin subfamily.

Its subcellular location is the nucleus. The protein resides in the cytoplasm. Functionally, protease inhibitor that may play a role in the regulation of protease activities during hematopoiesis and apoptosis induced by TNF. May regulate protease activities in the cytoplasm and in the nucleus. This Papio anubis (Olive baboon) protein is Serpin B10 (SERPINB10).